We begin with the raw amino-acid sequence, 530 residues long: TNF receptor-associated factor 6 (530 aa).

Residues 1–362 form an interaction with TAX1BP1 region; that stretch reads MSLLNCENSC…EAQQCNGIYI (362 aa). Residues 70 to 109 form an RING-type zinc finger; that stretch reads CPICLMALREAVQTPCGHRFCKACIIKSIRDAGHKCPVDN. Lysine 124 is covalently cross-linked (Glycyl lysine isopeptide (Lys-Gly) (interchain with G-Cter in SUMO); alternate). Residue lysine 124 forms a Glycyl lysine isopeptide (Lys-Gly) (interchain with G-Cter in ubiquitin); alternate linkage. A Glycyl lysine isopeptide (Lys-Gly) (interchain with G-Cter in SUMO) cross-link involves residue lysine 142. TRAF-type zinc fingers lie at residues 150-202 and 203-259; these read DHQV…EEKE and IHDQ…NHLA. Positions 299–356 form a coiled coil; the sequence is EDPNYEETIKQLESRLVRQDHQIRELTAKMETQSMYVGELKRTIRTLEDKVAEMEAQQ. Lysine 327 is covalently cross-linked (Glycyl lysine isopeptide (Lys-Gly) (interchain with G-Cter in ubiquitin)). The MATH domain occupies 358–507; the sequence is NGIYIWKIGN…DDTLLVRCEV (150 aa). The tract at residues 363-530 is interaction with TANK; sequence WKIGNFGMHL…FQPRSTDAGV (168 aa). Lysine 461 is covalently cross-linked (Glycyl lysine isopeptide (Lys-Gly) (interchain with G-Cter in SUMO)).

This sequence belongs to the TNF receptor-associated factor family. A subfamily. As to quaternary structure, homotrimer. Homooligomer. N-terminal region is dimeric while C-terminal region is trimeric; maybe providing a mode of oligomerization. Upon IL1B treatment, forms a complex with PELI1, IRAK1, IRAK4 and MYD88; this complex recruits MAP3K7/TAK1, TAB1 and TAB2 to mediate NF-kappa-B activation. Direct binding of SMAD6 to PELI1 prevents the complex formation and hence negatively regulates IL1R-TLR signaling and eventually NF-kappa-B-mediated gene expression. Binds to TNFRSF5/CD40 and TNFRSF11A/RANK. Associates with NGFR, TNFRSF17, IRAK2, IRAK3, PELI2, PELI3, RIPK2, MAP3K1, MAP3K5, MAP3K14, CSK, TRAF, TRAF-interacting protein TRIP and TNF receptor associated protein TDP2. Binds UBE2V1. Interacts with MAVS/IPS1. Interacts with TAX1BP1; this interaction mediates deubiquitination of TRAF6 and inhibition of NF-kappa-B activation. Interacts with IL17R. Interacts with SQSTM1 bridging NTRK1 and NGFR. Forms a ternary complex with SQSTM1 and PRKCZ. Interacts with IL1RL1. Interacts with AJUBA. Interacts with TRAFD1. Interacts with TICAM2. Interacts with ZFAND5. Interacts with ARRB1 and ARRB2. Interacts with MAP3K7 and TAB1/MAP3K7IP1; during IL-1 signaling. Interacts with UBE2N. Interacts with TGFBR1, HDAC1 and RANGAP1. Interacts with AKT1, AKT2 and AKT3. Interacts (via TRAF domains) with NUMBL (via C-terminal). Interacts (via TRAF domains) with DYNC2I2 (via WD domains). Interacts with RBCK1. Interacts with LIMD1 (via LIM domains). Interacts with RSAD2/viperin. Interacts with IFIT3 (via N-terminus). Interacts (via C-terminus) with EIF2AK2/PKR (via the kinase catalytic domain). Interacts with CARD14. Interacts with CD40 and MAP3K8; the interaction is required for ERK activation. Interacts with TICAM1 and this interaction is enhanced in the presence of WDFY1. Interacts with TANK; this interaction increases in response to DNA damage. Interacts with USP10; this interaction increases in response to DNA damage. Interacts with ZC3H12A; this interaction increases in response to DNA damage and is stimulated by TANK. Interacts with WDFY3. Interacts with TRIM13. Interacts with GPS2. Interacts (via C-terminus) with SASH1. Interacts with LRRC19. Interacts with IL17RA and TRAF3IP2. Interacts with TOMM70. Interacts with AMBRA1; interaction is required to mediate 'Lys-63'-linked ubiquitination of ULK1. Interacts with CRBN; this interaction inhibits TLR4-mediated signaling by preventing TRAF6-mediated ubiquitination of ECSIT. In terms of assembly, (Microbial infection) Interacts (via N-terminal RING domain) with Toxoplasma gondii GRA7; the interaction plays a role in GRA7-induced pro-inflammatory cytokine production in mouse macrophages. Sumoylated on Lys-124, Lys-142 and Lys-461 with SUMO1. In terms of processing, polyubiquitinated on Lys-124 by TRAF3IP2; after cell stimulation with IL17A. Polyubiquitinated; after cell stimulation with IL1B or TGFB. This ligand-induced cell stimulation leads to dimerization/oligomerization of TRAF6 molecules, followed by auto-ubiquitination which involves UBE2N and UBE2V1 and leads to TRAF6 activation. This 'Lys-63' site-specific poly-ubiquitination appears to be associated with the activation of signaling molecules. Endogenous autoubiquitination occurs only for the cytoplasmic form. Deubiquitinated by USP10 in a TANK-dependent manner, leading to the negative regulation of NF-kappa-B signaling upon DNA damage. LRRC19 induces 'Lys-63' ubiquitination. Ubiquitinated at Lys-327 by the SCF(FBXL2) complex, leading to its degradation by the proteasome. In terms of tissue distribution, highly expressed in brain, lung, liver, skeletal muscle, and kidney; lower expression in heart, spleen, and testis.

The protein localises to the cytoplasm. It localises to the cell cortex. The protein resides in the nucleus. Its subcellular location is the lipid droplet. The enzyme catalyses S-ubiquitinyl-[E2 ubiquitin-conjugating enzyme]-L-cysteine + [acceptor protein]-L-lysine = [E2 ubiquitin-conjugating enzyme]-L-cysteine + N(6)-ubiquitinyl-[acceptor protein]-L-lysine.. Its pathway is protein modification; protein ubiquitination. Its function is as follows. E3 ubiquitin ligase that, together with UBE2N and UBE2V1, mediates the synthesis of 'Lys-63'-linked-polyubiquitin chains conjugated to proteins, such as ECSIT, IKBKG, IRAK1, AKT1 and AKT2. Also mediates ubiquitination of free/unanchored polyubiquitin chain that leads to MAP3K7 activation. Leads to the activation of NF-kappa-B and JUN. Seems to also play a role in dendritic cells (DCs) maturation and/or activation. Represses c-Myb-mediated transactivation, in B-lymphocytes. Adapter protein that seems to play a role in signal transduction initiated via TNF receptor, IL-1 receptor and IL-17 receptor. Regulates osteoclast differentiation by mediating the activation of adapter protein complex 1 (AP-1) and NF-kappa-B, in response to RANK-L stimulation. Together with MAP3K8, mediates CD40 signals that activate ERK in B-cells and macrophages, and thus may play a role in the regulation of immunoglobulin production. Acts as a regulator of the JNK and NF-kappa-B signaling pathways by initiating assembly of heterotypic 'Lys-63'-/'Lys-48'-linked branched ubiquitin chains that are then recognized by TAB2: TRAF6 catalyzes initial 'Lys-63'-linked-polyubiquitin chains that are then branched via 'Lys-48'-linked polyubiquitin by HUWE1. 'Lys-63'-/'Lys-48'-linked branched ubiquitin chains protect 'Lys-63'-linkages from CYLD deubiquitination. Also participates in the TCR signaling by ubiquitinating LAT. The chain is TNF receptor-associated factor 6 (Traf6) from Mus musculus (Mouse).